A 185-amino-acid chain; its full sequence is Lectin B4 (185 aa).

Asn-48 carries an N-linked (GlcNAc...) asparagine glycan. 2 residues coordinate Mn(2+): Glu-111 and Asp-113. The Ca(2+) site is built by Asp-113, Tyr-115, Asn-117, and Asp-120. Position 120 (Asp-120) interacts with Mn(2+). N-linked (GlcNAc...) asparagine glycosylation occurs at Asn-122. A Mn(2+)-binding site is contributed by His-125.

The protein belongs to the leguminous lectin family. Homo- or heterotetramer. V.villosa isolectins are composed of either two subunits a and two subunits B (A2B2), four subunits A (A4), or four subunits B (B4). The predominant form, isolectin B4, has no A1 erythrocyte agglutinating activity.

Functionally, N-acetyl-D-galactosamine specific lectin. Binds the Tn determinant (GalNAc-alpha-O-Ser/Thr) of the tumor-associated glycopeptide. Could be required for agglutinating cells such as Tn-exposed erythrocytes. This is Lectin B4 from Vicia villosa (Hairy vetch).